A 579-amino-acid chain; its full sequence is F-box protein At5g39450 (579 aa).

In terms of domain architecture, F-box spans 16–62 (TCLLLSLPEDVIAVIARFVSPRDICNLSLCCKSLCDVVDSERIWLVQ).

The polypeptide is F-box protein At5g39450 (Arabidopsis thaliana (Mouse-ear cress)).